A 414-amino-acid polypeptide reads, in one-letter code: Eukaryotic initiation factor 4A-3 (414 aa).

The Q motif motif lies at 41–69 (ESFDDMGLQENLLRGIYAYGFEKPSAIQQ). The Helicase ATP-binding domain occupies 72 to 242 (IVPFCKGLDV…RKFMNKPVRI (171 aa)). An ATP-binding site is contributed by 85–92 (AQSGTGKT). The DEAD box signature appears at 190–193 (DEAD). Residues 253 to 414 (GIKQFYVNVE…ELPANVADLL (162 aa)) form the Helicase C-terminal domain.

This sequence belongs to the DEAD box helicase family. eIF4A subfamily. As to quaternary structure, eIF4F is a multi-subunit complex, the composition of which varies with external and internal environmental conditions. It is composed of at least EIF4A, EIF4E and EIF4G. Interacts with DRM2 (via UBA domains).

It is found in the cytoplasm. The protein resides in the nucleus. The enzyme catalyses ATP + H2O = ADP + phosphate + H(+). In terms of biological role, ATP-dependent RNA helicase which is a subunit of the eIF4F complex involved in cap recognition and is required for mRNA binding to ribosome. In the current model of translation initiation, eIF4A unwinds RNA secondary structures in the 5'-UTR of mRNAs which is necessary to allow efficient binding of the small ribosomal subunit, and subsequent scanning for the initiator codon. This chain is Eukaryotic initiation factor 4A-3, found in Oryza sativa subsp. japonica (Rice).